A 251-amino-acid polypeptide reads, in one-letter code: Phosphosulfolactate synthase (251 aa).

This sequence belongs to the phosphosulfolactate synthase family. Homotrimer. It depends on Mg(2+) as a cofactor.

It carries out the reaction (2R)-O-phospho-3-sulfolactate = phosphoenolpyruvate + sulfite + H(+). It participates in cofactor biosynthesis; coenzyme M biosynthesis; sulfoacetaldehyde from phosphoenolpyruvate and sulfite: step 1/4. In terms of biological role, catalyzes the addition of sulfite to phosphoenolpyruvate (PEP) to yield (2R)-phospho-3-sulfolactate (PSL). This chain is Phosphosulfolactate synthase (comA), found in Methanocaldococcus jannaschii (strain ATCC 43067 / DSM 2661 / JAL-1 / JCM 10045 / NBRC 100440) (Methanococcus jannaschii).